Here is a 382-residue protein sequence, read N- to C-terminus: PPE family protein PPE44 (382 aa).

It belongs to the mycobacterial PPE family.

It localises to the secreted. Its subcellular location is the cell wall. It is found in the cell surface. Functionally, virulence factor that modulates host innate immune response. This Mycobacterium tuberculosis (strain CDC 1551 / Oshkosh) protein is PPE family protein PPE44.